Consider the following 642-residue polypeptide: DNA primase (642 aa).

A CHC2-type zinc finger spans residues 41-65 (CPFHNEKSPSFHVRPNHGHFHCFGC). The 87-residue stretch at 262-348 (HQAVVVEGYT…AGKSFVAVAA (87 aa)) folds into the Toprim domain. The Mg(2+) site is built by glutamate 268, aspartate 319, and aspartate 321. Positions 445-480 (NRRSVPERTRRRSVSVEQSPFMQPPGAPADQLAARP) are disordered.

Belongs to the DnaG primase family. Monomer. Interacts with DnaB. Zn(2+) serves as cofactor. Mg(2+) is required as a cofactor.

It carries out the reaction ssDNA + n NTP = ssDNA/pppN(pN)n-1 hybrid + (n-1) diphosphate.. Its function is as follows. RNA polymerase that catalyzes the synthesis of short RNA molecules used as primers for DNA polymerase during DNA replication. The polypeptide is DNA primase (Mycobacterium leprae (strain TN)).